The primary structure comprises 382 residues: Galactokinase (382 aa).

Position 34–37 (34–37 (EHTD)) interacts with substrate. Position 124 to 130 (124 to 130 (GAGLSSS)) interacts with ATP. 2 residues coordinate Mg(2+): S130 and E162. The active-site Proton acceptor is the D174. Y223 contacts substrate.

The protein belongs to the GHMP kinase family. GalK subfamily.

It is found in the cytoplasm. It catalyses the reaction alpha-D-galactose + ATP = alpha-D-galactose 1-phosphate + ADP + H(+). It participates in carbohydrate metabolism; galactose metabolism. Its function is as follows. Catalyzes the transfer of the gamma-phosphate of ATP to D-galactose to form alpha-D-galactose-1-phosphate (Gal-1-P). The sequence is that of Galactokinase from Escherichia coli O17:K52:H18 (strain UMN026 / ExPEC).